The sequence spans 550 residues: Probable importin subunit alpha-A (550 aa).

Basic and acidic residues predominate over residues 1–30; the sequence is MSSRDKQDSRKKEFKKSLDSETARRKREEN. Residues 1 to 34 form a disordered region; the sequence is MSSRDKQDSRKKEFKKSLDSETARRKREENSIGI. The IBB domain maps to 1 to 56; sequence MSSRDKQDSRKKEFKKSLDSETARRKREENSIGIRKNAREELMLKRRGIVQPNPST. ARM repeat units follow at residues 116 to 155, 158 to 198, 201 to 241, 256 to 297, 300 to 339, 342 to 381, 385 to 424, and 428 to 467; these read YPPI…NIAS, NRQT…NIAG, VDSR…KIGL, KPQP…YLCD, NTKI…NIVT, SSQT…NITA, SQID…NSTN, and TKSI…NIIK.

It belongs to the importin alpha family. In terms of assembly, forms a complex with tnpo/importin subunit beta.

It localises to the cytoplasm. The protein localises to the nucleus envelope. Functionally, functions in nuclear protein import via a substrate-importin alpha-beta transport complex that passes though the nuclear pore complexes (NPC). Binds specifically and directly to substrates containing either a simple or bipartite NLS motif. The chain is Probable importin subunit alpha-A from Dictyostelium discoideum (Social amoeba).